Consider the following 156-residue polypeptide: Glycine cleavage system H protein 2, mitochondrial (156 aa).

A mitochondrion-targeting transit peptide spans 1-23 (MACRLFWASRVASHLRISVAQRG). Residues 47 to 129 (KATFGITDHA…YEQGWIIKVE (83 aa)) form the Lipoyl-binding domain. The residue at position 88 (lysine 88) is an N6-lipoyllysine. A Phosphoserine modification is found at serine 131.

This sequence belongs to the GcvH family. In terms of assembly, the glycine cleavage system is composed of four proteins: P, T, L and H. (R)-lipoate serves as cofactor.

It localises to the mitochondrion. The glycine decarboxylase (GDC) or glycine cleavage system catalyzes the degradation of glycine. The H protein shuttles the methylamine group of glycine from the P protein to the T protein. The chain is Glycine cleavage system H protein 2, mitochondrial (GDH2) from Arabidopsis thaliana (Mouse-ear cress).